Here is a 245-residue protein sequence, read N- to C-terminus: Large ribosomal subunit protein uL2 (245 aa).

Residues 196–226 (SPYAHPHGGGSHQKGGTPVSKTAPPGQKVGF) are disordered.

The protein belongs to the universal ribosomal protein uL2 family. Part of the 50S ribosomal subunit. Forms a bridge to the 30S subunit in the 70S ribosome.

In terms of biological role, one of the primary rRNA binding proteins. Required for association of the 30S and 50S subunits to form the 70S ribosome, for tRNA binding and peptide bond formation. It has been suggested to have peptidyltransferase activity; this is somewhat controversial. Makes several contacts with the 16S rRNA in the 70S ribosome. This chain is Large ribosomal subunit protein uL2, found in Pyrobaculum neutrophilum (strain DSM 2338 / JCM 9278 / NBRC 100436 / V24Sta) (Thermoproteus neutrophilus).